A 555-amino-acid polypeptide reads, in one-letter code: Glucose-6-phosphate isomerase (555 aa).

The Proton donor role is filled by Glu365. Residues His396 and Lys522 contribute to the active site.

It belongs to the GPI family.

Its subcellular location is the cytoplasm. It catalyses the reaction alpha-D-glucose 6-phosphate = beta-D-fructose 6-phosphate. The protein operates within carbohydrate biosynthesis; gluconeogenesis. It functions in the pathway carbohydrate degradation; glycolysis; D-glyceraldehyde 3-phosphate and glycerone phosphate from D-glucose: step 2/4. Catalyzes the reversible isomerization of glucose-6-phosphate to fructose-6-phosphate. This is Glucose-6-phosphate isomerase from Psychrobacter arcticus (strain DSM 17307 / VKM B-2377 / 273-4).